The sequence spans 131 residues: MTEIPADLHYTEEHEWVRRTGDTTVRIGITDYAQSQLGDVVFVQLPDVGSELTAGSTFGEVESTKSVSDLFAPITAKVIAANGDLDSDPQLVNSDPYGEGWLVDLEAASAADLDAALNDLLDASGYGDATD.

One can recognise a Lipoyl-binding domain in the interval 24–106 (TVRIGITDYA…YGEGWLVDLE (83 aa)). N6-lipoyllysine is present on Lys65.

This sequence belongs to the GcvH family. As to quaternary structure, the glycine cleavage system is composed of four proteins: P, T, L and H. The cofactor is (R)-lipoate.

In terms of biological role, the glycine cleavage system catalyzes the degradation of glycine. The H protein shuttles the methylamine group of glycine from the P protein to the T protein. The chain is Glycine cleavage system H protein from Mycobacteroides abscessus (strain ATCC 19977 / DSM 44196 / CCUG 20993 / CIP 104536 / JCM 13569 / NCTC 13031 / TMC 1543 / L948) (Mycobacterium abscessus).